The primary structure comprises 484 residues: Sorting assembly machinery 50 kDa subunit (484 aa).

The protein belongs to the SAM50/omp85 family. In terms of assembly, component of the mitochondrial outer membrane sorting assembly machinery (SAM or TOB) complex, which at least consists of SAM35, SAM37 and SAM50. Associates with the mitochondrial contact site and cristae organizing system (MICOS) complex (also known as MINOS or MitOS complex).

It is found in the mitochondrion outer membrane. Its function is as follows. Component of the mitochondrial outer membrane sorting assembly machinery (SAM or TOB) complex, which is required for the sorting of proteins with complicated topology, such as beta-barrel proteins, to the mitochondrial outer membrane after import by the TOM complex. The chain is Sorting assembly machinery 50 kDa subunit (SAM50) from Saccharomyces cerevisiae (strain ATCC 204508 / S288c) (Baker's yeast).